Reading from the N-terminus, the 475-residue chain is Putative response regulator NtrX-like (475 aa).

Residues 5-121 (DVLIVDDEES…KLVILLKRAC (117 aa)) form the Response regulatory domain. Asp54 is modified (4-aspartylphosphate). The Sigma-54 factor interaction domain occupies 143–369 (LVGGCSVTLK…LRNVVEWTLI (227 aa)). Residues 171 to 178 (GKVGSGKE) and 232 to 241 (ANNGTLYIDE) each bind ATP.

Member of the two-component regulatory system RF_0895/RF_0427. This chain is Putative response regulator NtrX-like, found in Rickettsia felis (strain ATCC VR-1525 / URRWXCal2) (Rickettsia azadi).